We begin with the raw amino-acid sequence, 555 residues long: Sulfite reductase [ferredoxin] (555 aa).

A disordered region spans residues 1-22 (MTTARPAKARNEGQWALGHREP). Positions 69-161 (YTQREQGYDG…DVGLQTTEAC (93 aa)) form a cross-link, 3'-(S-cysteinyl)-tyrosine (Tyr-Cys). [4Fe-4S] cluster-binding residues include Cys-417, Cys-423, Cys-463, and Cys-467. Siroheme is bound at residue Cys-467.

It belongs to the nitrite and sulfite reductase 4Fe-4S domain family. Monomer. It depends on siroheme as a cofactor. Requires [4Fe-4S] cluster as cofactor.

It carries out the reaction hydrogen sulfide + 6 oxidized [2Fe-2S]-[ferredoxin] + 3 H2O = sulfite + 6 reduced [2Fe-2S]-[ferredoxin] + 7 H(+). Catalyzes the reduction of sulfite to sulfide, a step in the biosynthesis of sulfur-containing amino acids and cofactors. The protein is Sulfite reductase [ferredoxin] (sir) of Mycobacterium bovis (strain ATCC BAA-935 / AF2122/97).